Reading from the N-terminus, the 379-residue chain is 3-isopropylmalate dehydrogenase 1 (379 aa).

The substrate site is built by arginine 101, arginine 111, arginine 139, and aspartate 230. Residues aspartate 230, aspartate 254, and aspartate 258 each contribute to the Mg(2+) site. NAD(+) is bound at residue glycine 293 to asparagine 305.

Belongs to the isocitrate and isopropylmalate dehydrogenases family. LeuB type 1 subfamily. As to quaternary structure, homodimer. Mg(2+) is required as a cofactor. The cofactor is Mn(2+).

Its subcellular location is the cytoplasm. It catalyses the reaction (2R,3S)-3-isopropylmalate + NAD(+) = 4-methyl-2-oxopentanoate + CO2 + NADH. It functions in the pathway amino-acid biosynthesis; L-leucine biosynthesis; L-leucine from 3-methyl-2-oxobutanoate: step 3/4. Its function is as follows. Catalyzes the oxidation of 3-carboxy-2-hydroxy-4-methylpentanoate (3-isopropylmalate) to 3-carboxy-4-methyl-2-oxopentanoate. The product decarboxylates to 4-methyl-2 oxopentanoate. The polypeptide is 3-isopropylmalate dehydrogenase 1 (Bradyrhizobium diazoefficiens (strain JCM 10833 / BCRC 13528 / IAM 13628 / NBRC 14792 / USDA 110)).